The primary structure comprises 295 residues: Protoheme IX farnesyltransferase (295 aa).

The next 9 helical transmembrane spans lie at 8–28, 35–55, 83–103, 107–127, 132–152, 162–182, 208–228, 229–249, and 263–283; these read ITKP…FFLA, GGLF…GCVF, GVTL…LWFG, LATA…SLYL, IYGT…GYCA, LTLL…IAIF, IFWY…GGYA, GYGY…MALR, and VFIF…IDFQ.

This sequence belongs to the UbiA prenyltransferase family. Protoheme IX farnesyltransferase subfamily.

Its subcellular location is the cell inner membrane. The enzyme catalyses heme b + (2E,6E)-farnesyl diphosphate + H2O = Fe(II)-heme o + diphosphate. It functions in the pathway porphyrin-containing compound metabolism; heme O biosynthesis; heme O from protoheme: step 1/1. Its function is as follows. Converts heme B (protoheme IX) to heme O by substitution of the vinyl group on carbon 2 of heme B porphyrin ring with a hydroxyethyl farnesyl side group. This is Protoheme IX farnesyltransferase from Chromohalobacter salexigens (strain ATCC BAA-138 / DSM 3043 / CIP 106854 / NCIMB 13768 / 1H11).